Reading from the N-terminus, the 83-residue chain is Hainantoxin-III 8 (83 aa).

The first 21 residues, 1-21 (MKASMFLALAGLVLLFVVGYA), serve as a signal peptide directing secretion. Positions 22-48 (SESEEKEFPRELLSKIFAVDDFTGEER) are excised as a propeptide. 3 disulfides stabilise this stretch: cysteine 50–cysteine 65, cysteine 57–cysteine 70, and cysteine 64–cysteine 77. Leucine 81 is subject to Leucine amide.

This sequence belongs to the neurotoxin 10 (Hwtx-1) family. 15 (Hntx-3) subfamily. In terms of assembly, monomer. As to expression, expressed by the venom gland.

Its subcellular location is the secreted. Its function is as follows. Selective antagonist of neuronal tetrodotoxin (TTX)-sensitive voltage-gated sodium channels (IC(50)=1270 nM on Nav1.1/SCN1A, 270 nM on Nav1.2/SCN2A, 491 nM on Nav1.3/SCN3A and 232 nM on Nav1.7/SCN9A). This toxin suppress Nav1.7 current amplitude without significantly altering the activation, inactivation, and repriming kinetics. Short extreme depolarizations partially activate the toxin-bound channel, indicating voltage-dependent inhibition of this toxin. This toxin increases the deactivation of the Nav1.7 current after extreme depolarizations. The toxin-Nav1.7 complex is gradually dissociated upon prolonged strong depolarizations in a voltage-dependent manner, and the unbound toxin rebinds to Nav1.7 after a long repolarization. Moreover, analysis of chimeric channels showed that the DIIS3-S4 linker is critical for toxin binding to Nav1.7. These data are consistent with this toxin interacting with Nav1.7 site 4 and trapping the domain II voltage sensor in the closed state. The sequence is that of Hainantoxin-III 8 from Cyriopagopus hainanus (Chinese bird spider).